Here is a 455-residue protein sequence, read N- to C-terminus: Exodeoxyribonuclease 7 large subunit (455 aa).

This sequence belongs to the XseA family. Heterooligomer composed of large and small subunits.

Its subcellular location is the cytoplasm. It catalyses the reaction Exonucleolytic cleavage in either 5'- to 3'- or 3'- to 5'-direction to yield nucleoside 5'-phosphates.. Bidirectionally degrades single-stranded DNA into large acid-insoluble oligonucleotides, which are then degraded further into small acid-soluble oligonucleotides. This chain is Exodeoxyribonuclease 7 large subunit, found in Lactobacillus acidophilus (strain ATCC 700396 / NCK56 / N2 / NCFM).